Consider the following 95-residue polypeptide: Large ribosomal subunit protein bL25 (95 aa).

It belongs to the bacterial ribosomal protein bL25 family. Part of the 50S ribosomal subunit; part of the 5S rRNA/L5/L18/L25 subcomplex. Contacts the 5S rRNA. Binds to the 5S rRNA independently of L5 and L18.

In terms of biological role, this is one of the proteins that binds to the 5S RNA in the ribosome where it forms part of the central protuberance. The chain is Large ribosomal subunit protein bL25 from Chromobacterium violaceum (strain ATCC 12472 / DSM 30191 / JCM 1249 / CCUG 213 / NBRC 12614 / NCIMB 9131 / NCTC 9757 / MK).